The following is a 131-amino-acid chain: Methylglyoxal synthase (131 aa).

Positions 1-131 (MKIALIAHDK…GDLDYRKLRK (131 aa)) constitute an MGS-like domain. Substrate contacts are provided by residues His8, Lys12, 34 to 37 (TGTT), and 54 to 55 (SG). The Proton donor/acceptor role is filled by Asp60. His87 serves as a coordination point for substrate.

The protein belongs to the methylglyoxal synthase family.

It catalyses the reaction dihydroxyacetone phosphate = methylglyoxal + phosphate. In terms of biological role, catalyzes the formation of methylglyoxal from dihydroxyacetone phosphate. This is Methylglyoxal synthase from Bacillus mycoides (strain KBAB4) (Bacillus weihenstephanensis).